We begin with the raw amino-acid sequence, 84 residues long: Putative membrane protein insertion efficiency factor (84 aa).

The protein belongs to the UPF0161 family.

It localises to the cell inner membrane. Could be involved in insertion of integral membrane proteins into the membrane. The chain is Putative membrane protein insertion efficiency factor from Shewanella amazonensis (strain ATCC BAA-1098 / SB2B).